The sequence spans 485 residues: Glutamate--tRNA ligase (485 aa).

The short motif at 12–22 (PSPTGYMHVGN) is the 'HIGH' region element. Zn(2+) contacts are provided by Cys-109, Cys-111, Cys-136, and His-138. Residues 253 to 257 (KLSKR) carry the 'KMSKS' region motif. Lys-256 contributes to the ATP binding site.

It belongs to the class-I aminoacyl-tRNA synthetase family. Glutamate--tRNA ligase type 1 subfamily. Monomer. Zn(2+) serves as cofactor.

The protein localises to the cytoplasm. It catalyses the reaction tRNA(Glu) + L-glutamate + ATP = L-glutamyl-tRNA(Glu) + AMP + diphosphate. In terms of biological role, catalyzes the attachment of glutamate to tRNA(Glu) in a two-step reaction: glutamate is first activated by ATP to form Glu-AMP and then transferred to the acceptor end of tRNA(Glu). The protein is Glutamate--tRNA ligase of Clostridium botulinum (strain Eklund 17B / Type B).